The sequence spans 423 residues: Gamma-glutamyl phosphate reductase (423 aa).

This sequence belongs to the gamma-glutamyl phosphate reductase family.

It localises to the cytoplasm. The catalysed reaction is L-glutamate 5-semialdehyde + phosphate + NADP(+) = L-glutamyl 5-phosphate + NADPH + H(+). It functions in the pathway amino-acid biosynthesis; L-proline biosynthesis; L-glutamate 5-semialdehyde from L-glutamate: step 2/2. In terms of biological role, catalyzes the NADPH-dependent reduction of L-glutamate 5-phosphate into L-glutamate 5-semialdehyde and phosphate. The product spontaneously undergoes cyclization to form 1-pyrroline-5-carboxylate. This Pseudomonas putida (strain ATCC 700007 / DSM 6899 / JCM 31910 / BCRC 17059 / LMG 24140 / F1) protein is Gamma-glutamyl phosphate reductase.